The chain runs to 181 residues: Protein Syd (181 aa).

This sequence belongs to the Syd family.

The protein localises to the cell inner membrane. Interacts with the SecY protein in vivo. May bind preferentially to an uncomplexed state of SecY, thus functioning either as a chelating agent for excess SecY in the cell or as a regulatory factor that negatively controls the translocase function. This chain is Protein Syd, found in Escherichia coli (strain K12 / DH10B).